A 360-amino-acid polypeptide reads, in one-letter code: Photosystem II protein D1 1 (360 aa).

The next 3 membrane-spanning stretches (helical) occupy residues 29–46, 118–133, and 142–156; these read YVGW…TAAI, HFLI…QWEL, and WIPV…AATA. Histidine 118 is a binding site for chlorophyll a. Tyrosine 126 is a binding site for pheophytin a. [CaMn4O5] cluster contacts are provided by aspartate 170 and glutamate 189. The chain crosses the membrane as a helical span at residues 197–218; that stretch reads FHMIGVAGVFGGALFSAMHGSL. Histidine 198 provides a ligand contact to chlorophyll a. A quinone is bound by residues histidine 215 and 264–265; that span reads SF. Residue histidine 215 coordinates Fe cation. Histidine 272 lines the Fe cation pocket. Residues 274 to 288 traverse the membrane as a helical segment; that stretch reads FLAAWPVIGIWFAAL. Residues histidine 332, glutamate 333, aspartate 342, and alanine 344 each contribute to the [CaMn4O5] cluster site. The propeptide occupies 345–360; the sequence is SGEVQPIALAAPAIAS.

This sequence belongs to the reaction center PufL/M/PsbA/D family. In terms of assembly, PSII is composed of 1 copy each of membrane proteins PsbA, PsbB, PsbC, PsbD, PsbE, PsbF, PsbH, PsbI, PsbJ, PsbK, PsbL, PsbM, PsbT, PsbX, PsbY, PsbZ, Psb30/Ycf12, peripheral proteins PsbO, CyanoQ (PsbQ), PsbU, PsbV and a large number of cofactors. It forms dimeric complexes. Requires The D1/D2 heterodimer binds P680, chlorophylls that are the primary electron donor of PSII, and subsequent electron acceptors. It shares a non-heme iron and each subunit binds pheophytin, quinone, additional chlorophylls, carotenoids and lipids. D1 provides most of the ligands for the Mn4-Ca-O5 cluster of the oxygen-evolving complex (OEC). There is also a Cl(-1) ion associated with D1 and D2, which is required for oxygen evolution. The PSII complex binds additional chlorophylls, carotenoids and specific lipids. as cofactor. In terms of processing, tyr-161 forms a radical intermediate that is referred to as redox-active TyrZ, YZ or Y-Z. C-terminally processed by CtpA; processing is essential to allow assembly of the oxygen-evolving complex and thus photosynthetic growth.

Its subcellular location is the cellular thylakoid membrane. The catalysed reaction is 2 a plastoquinone + 4 hnu + 2 H2O = 2 a plastoquinol + O2. Its function is as follows. Photosystem II (PSII) is a light-driven water:plastoquinone oxidoreductase that uses light energy to abstract electrons from H(2)O, generating O(2) and a proton gradient subsequently used for ATP formation. It consists of a core antenna complex that captures photons, and an electron transfer chain that converts photonic excitation into a charge separation. The D1/D2 (PsbA/PsbD) reaction center heterodimer binds P680, the primary electron donor of PSII as well as several subsequent electron acceptors. The chain is Photosystem II protein D1 1 from Trichormus variabilis (strain ATCC 29413 / PCC 7937) (Anabaena variabilis).